We begin with the raw amino-acid sequence, 318 residues long: MTVITIAKRGLPKLTTSTSSTTTASSSSTITSVASSSSSLPLLSNSTSSSIIPSITPPSRNGNPYILDSGDMPNGTVFIVVGGIAGVIFLAILLWWVITTYSSHRLTRSVQDYESKMFSAQHTQFYGDSPYMDYPAKENFQDQVHISESDISPGNKDESVKDALVSHTNNEKPFLSNFERPLSSLVSESNRNSLFISPTGDILYKTRLSKLYQESPRLLQKPVIMTSDNVSTNSLVSTISSSSASSLDNGNEKEVGEDIRKPAKIASSPSRKLLNSPESDGSVNRNHSKGNLLVVQSKRKPTPSTYLEHMLEGKEQDE.

Residues 78–98 traverse the membrane as a helical segment; the sequence is FIVVGGIAGVIFLAILLWWVI. Phosphoserine is present on Ser-129. Over residues 238 to 247 the composition is skewed to low complexity; it reads TISSSSASSL. Residues 238–318 are disordered; that stretch reads TISSSSASSL…HMLEGKEQDE (81 aa). The segment covering 250–261 has biased composition (basic and acidic residues); the sequence is GNEKEVGEDIRK. The span at 276-285 shows a compositional bias: polar residues; sequence SPESDGSVNR. 3 positions are modified to phosphoserine: Ser-279, Ser-282, and Ser-288. Residues 309–318 are compositionally biased toward basic and acidic residues; the sequence is HMLEGKEQDE. Residue Lys-314 forms a Glycyl lysine isopeptide (Lys-Gly) (interchain with G-Cter in ubiquitin) linkage.

It belongs to the PRM5 family.

Its subcellular location is the membrane. This chain is Pheromone-regulated membrane protein 5 (PRM5), found in Saccharomyces cerevisiae (strain Lalvin EC1118 / Prise de mousse) (Baker's yeast).